A 631-amino-acid chain; its full sequence is uncharacterized protein (631 aa).

The segment covering 1–19 (MSKMGSSSMGELQDGITQE) has biased composition (polar residues). Residues 1–92 (MSKMGSSSMG…EENYPRLQTT (92 aa)) are disordered. The segment covering 67-76 (KKKKKKKLKK) has biased composition (basic residues). An Exonuclease domain is found at 277-426 (LAIDCEMVRT…EDALACVDLL (150 aa)). The segment covering 517 to 526 (ANRNTKQENN) has biased composition (polar residues). Residues 517–540 (ANRNTKQENNSDTDTENDSVEEDQ) form a disordered region. The span at 527 to 540 (SDTDTENDSVEEDQ) shows a compositional bias: acidic residues.

The protein belongs to the REXO1/REXO3 family.

It localises to the nucleus. This is an uncharacterized protein from Schizosaccharomyces pombe (strain 972 / ATCC 24843) (Fission yeast).